We begin with the raw amino-acid sequence, 255 residues long: Complement C1q-like protein 3 (255 aa).

The N-terminal stretch at 1–20 (MVLLLVILIPVLVSSAGTSA) is a signal peptide. Residues 39 to 109 (KAPSTAATPD…GLPGPPGAPG (71 aa)) are disordered. In terms of domain architecture, Collagen-like spans 61-111 (GPKGEAGRPGKAGPRGPPGEPGPPGPVGPPGEKGEPGRQGLPGPPGAPGLN). Residues 75-89 (RGPPGEPGPPGPVGP) show a composition bias toward pro residues. Residues 122 to 255 (STVPKIAFYA…TFSGFIIYAD (134 aa)) enclose the C1q domain.

In terms of assembly, forms homooligomers. Interacts with ADGRB3. Forms heterooligomers with C1QL2 and C1QL4, when proteins are coexpressed; this interaction does not occur after secretion. In terms of tissue distribution, highly expressed in brain and white adipose tissue. In gonadal fat pad, expressed at lower levels in adipocytes than in the stromal vascular fraction (VSP), which contains preadipocytes, fibroblasts, endothelial cells and occasional immune cells. Expression exhibits sexually dimorphism, with higher levels in females than in males (at protein level). Tends to be up-regulated in adipose tissue from obese males, but not females. Expressed in glial cells.

The protein localises to the secreted. In terms of biological role, may regulate the number of excitatory synapses that are formed on hippocampus neurons. Has no effect on inhibitory synapses. Plays a role in glucose homeostasis. Via AMPK signaling pathway, stimulates glucose uptake in adipocytes, myotubes and hepatocytes and enhances insulin-stimulated glucose uptake. In a hepatoma cell line, reduces the expression of gluconeogenic enzymes G6PC1 and PCK1 and hence decreases de novo glucose production. This is Complement C1q-like protein 3 (C1ql3) from Mus musculus (Mouse).